Here is an 86-residue protein sequence, read N- to C-terminus: Conidiation-specific protein 10 (86 aa).

Residues 1 to 11 (MAGTGNDNPGN) are compositionally biased toward polar residues. The interval 1-86 (MAGTGNDNPG…SGGTGADDDE (86 aa)) is disordered. The segment covering 49–58 (SKGGKASSGS) has biased composition (low complexity). Residues 62 to 71 (GSEKAREAGR) are compositionally biased toward basic and acidic residues. The span at 75-86 (KASGGTGADDDE) shows a compositional bias: gly residues.

This sequence belongs to the con-10 family.

This Neurospora crassa (strain ATCC 24698 / 74-OR23-1A / CBS 708.71 / DSM 1257 / FGSC 987) protein is Conidiation-specific protein 10 (con-10).